Reading from the N-terminus, the 275-residue chain is Phosphate import ATP-binding protein PstB 1 (275 aa).

The ABC transporter domain maps to F22–P261. ATP is bound at residue G54 to S61.

The protein belongs to the ABC transporter superfamily. Phosphate importer (TC 3.A.1.7) family. As to quaternary structure, the complex is composed of two ATP-binding proteins (PstB), two transmembrane proteins (PstC and PstA) and a solute-binding protein (PstS).

It is found in the cell inner membrane. The enzyme catalyses phosphate(out) + ATP + H2O = ADP + 2 phosphate(in) + H(+). In terms of biological role, part of the ABC transporter complex PstSACB involved in phosphate import. Responsible for energy coupling to the transport system. The sequence is that of Phosphate import ATP-binding protein PstB 1 from Trichormus variabilis (strain ATCC 29413 / PCC 7937) (Anabaena variabilis).